We begin with the raw amino-acid sequence, 520 residues long: Maturase K (520 aa).

It belongs to the intron maturase 2 family. MatK subfamily.

Its subcellular location is the plastid. The protein resides in the chloroplast. Its function is as follows. Usually encoded in the trnK tRNA gene intron. Probably assists in splicing its own and other chloroplast group II introns. The chain is Maturase K from Beaucarnea recurvata (Elephant-foot tree).